A 32-amino-acid polypeptide reads, in one-letter code: MSDIN-like toxin proprotein 1 (32 aa).

The propeptide occupies 1 to 10 (MSDINATRLP). The cyclopeptide (Ile-Pro) cross-link spans 11–18 (IFWFIYFP). Positions 19–32 (CVSDVDSTLTRGER) are excised as a propeptide.

The protein belongs to the MSDIN fungal toxin family. Post-translationally, processed by the macrocyclase-peptidase enzyme POPB to yield a toxic cyclic octapeptide. POPB first removes 10 residues from the N-terminus. Conformational trapping of the remaining peptide forces the enzyme to release this intermediate rather than proceed to macrocyclization. The enzyme rebinds the remaining peptide in a different conformation and catalyzes macrocyclization of the N-terminal 8 residues. Expressed in basidiocarps.

Functionally, probable toxin that belongs to the MSDIN-like toxin family responsible for a large number of food poisoning cases and deaths. This Amanita exitialis (Guangzhou destroying angel) protein is MSDIN-like toxin proprotein 1.